We begin with the raw amino-acid sequence, 254 residues long: Imidazole glycerol phosphate synthase subunit HisF (254 aa).

Catalysis depends on residues aspartate 12 and aspartate 131.

This sequence belongs to the HisA/HisF family. As to quaternary structure, heterodimer of HisH and HisF.

It localises to the cytoplasm. It carries out the reaction 5-[(5-phospho-1-deoxy-D-ribulos-1-ylimino)methylamino]-1-(5-phospho-beta-D-ribosyl)imidazole-4-carboxamide + L-glutamine = D-erythro-1-(imidazol-4-yl)glycerol 3-phosphate + 5-amino-1-(5-phospho-beta-D-ribosyl)imidazole-4-carboxamide + L-glutamate + H(+). It functions in the pathway amino-acid biosynthesis; L-histidine biosynthesis; L-histidine from 5-phospho-alpha-D-ribose 1-diphosphate: step 5/9. IGPS catalyzes the conversion of PRFAR and glutamine to IGP, AICAR and glutamate. The HisF subunit catalyzes the cyclization activity that produces IGP and AICAR from PRFAR using the ammonia provided by the HisH subunit. This is Imidazole glycerol phosphate synthase subunit HisF from Leifsonia xyli subsp. xyli (strain CTCB07).